The chain runs to 387 residues: Cyclin-B1-4 (387 aa).

Positions 1-29 (MASSRVSDLPHQRGIAGEIKPKNVAGHGR) are disordered.

This sequence belongs to the cyclin family. Cyclin AB subfamily.

This Arabidopsis thaliana (Mouse-ear cress) protein is Cyclin-B1-4 (CYCB1-4).